The sequence spans 375 residues: MDIERKIELIKKKPTEELLTEENLRHLLEVGAPLQHYIGFEISGYIHLGTGLMAGAKIADLQKAGVKTRIFLADWHSWINDKLGGDLEVIQKVALTYFKEGMKQSIKVMGGDPDKVEFVLASEILDKGDYWQTVIDISKNVTLARMLRSITIMGRQMGEAIDFAKLIYPAMQVADIFYQGVTIAHAGMDQRKAHVIAIEVAQKLKYHPLEWKGEKLKPVALHHHLLLGLQEPPVWPIESEEQFKELKTQMKMSKSKPYSAVFIHDSPEEIKQKLRKAFCPAREVKYNPVLDWAEYIIFREEPTEFTIHRPAKFGGDVTYTTFEELKKDFAEGKLHPLDLKNAVAEYLIELLKPVREYFEKHPEPLELMREIKITR.

Residues Y37, Y168, Q172, D175, and Q190 each contribute to the L-tyrosine site. Residues 251-255 carry the 'KMSKS' region motif; it reads KMSKS. K254 is an ATP binding site.

This sequence belongs to the class-I aminoacyl-tRNA synthetase family. TyrS type 4 subfamily. In terms of assembly, homodimer.

The protein resides in the cytoplasm. It catalyses the reaction tRNA(Tyr) + L-tyrosine + ATP = L-tyrosyl-tRNA(Tyr) + AMP + diphosphate + H(+). In terms of biological role, catalyzes the attachment of tyrosine to tRNA(Tyr) in a two-step reaction: tyrosine is first activated by ATP to form Tyr-AMP and then transferred to the acceptor end of tRNA(Tyr). This Thermococcus kodakarensis (strain ATCC BAA-918 / JCM 12380 / KOD1) (Pyrococcus kodakaraensis (strain KOD1)) protein is Tyrosine--tRNA ligase.